The following is a 341-amino-acid chain: MATIKDVAKHAGVSTTTVSHVINKTRFVAENTKAAVWAAIKELHYSPSAVARSLKVNHTKSIGLLATSSEAPYFAEVIEAVENSCYSKGYTLILCNSHNNLDKQKAYLAMLAQKRVDGLLVMCSEYPDQLLGMLEDYRNIPMVVMDWGTARGDFTDSIIDNAFEGGYLAGRYLIERGHRDIGAIPGQLARNTGGGRHQGFLKALEEANIPVREEWIVQGDFEPESGYKAMHQILTQKHRPTAVFCGGDIMAMGAICAADELGLRVPQDISVIGYDNVRNARYFSPALTTIHQPKERLGETAFAMLLDRIVSKREDPQTIEVHPKLVERRSVADGPFRDYRR.

The HTH lacI-type domain occupies 2 to 56 (ATIKDVAKHAGVSTTTVSHVINKTRFVAENTKAAVWAAIKELHYSPSAVARSLKV). Residues 4 to 23 (IKDVAKHAGVSTTTVSHVIN) constitute a DNA-binding region (H-T-H motif). Residues 48-56 (SAVARSLKV) mediate DNA binding. Residues Tyr-73, Arg-190, Thr-192, Phe-221, and Asp-275 each contribute to the hypoxanthine site.

Homodimer.

Its pathway is purine metabolism; purine nucleotide biosynthesis [regulation]. Functionally, is the main repressor of the genes involved in the de novo synthesis of purine nucleotides, regulating purB, purC, purEK, purF, purHD, purL, purMN and guaBA expression. PurR is allosterically activated to bind its cognate DNA by binding the purine corepressors, hypoxanthine or guanine, thereby effecting transcription repression. The chain is HTH-type transcriptional repressor PurR from Yersinia pseudotuberculosis serotype O:1b (strain IP 31758).